The chain runs to 301 residues: Zinc finger protein 346 (301 aa).

Matrin-type zinc fingers lie at residues 55–85 (SQCK…KVRR) and 117–141 (KACS…GKVH). Residues Cys-57, Cys-60, His-73, His-79, Cys-119, Cys-122, His-135, and His-141 each contribute to the Zn(2+) site. The interval 151–177 (GSQTPALPQPEAQAKKDDGMQGPAEQD) is disordered. 2 Matrin-type zinc fingers span residues 180–210 (RFCS…HMNK) and 230–257 (YPCT…HKNH). The segment at 250 to 283 (SGSKHKNHAKPKKGPNAFAPPPDNYQPDYQYPTN) is disordered. A compositionally biased stretch (basic residues) spans 251–262 (GSKHKNHAKPKK).

Its subcellular location is the nucleus. It is found in the cytoplasm. Its function is as follows. Binds preferentially to dsRNA, but also to RNA-DNA hybrids. The sequence is that of Zinc finger protein 346 from Danio rerio (Zebrafish).